The sequence spans 413 residues: Sprouty-related, EVH1 domain-containing protein 2 (413 aa).

Residues 5–122 (THPNDDSYIV…RGVRKALEDL (118 aa)) enclose the WH1 domain. A disordered region spans residues 122–163 (LTEGSTTSSSTLQNEAELGDDDVFTTATDSSSNSSQKKDHST). Positions 195 to 248 (FSRNLFPFEDEEIVRINPRERWMITGYEDYRYAAVPDKFIQPEDSDSYVQISKN) constitute a KBD domain. Residues 303–411 (RCVYCRDMFN…CGCCGGKHKA (109 aa)) enclose the SPR domain.

It localises to the cell membrane. The protein localises to the cytoplasmic vesicle. It is found in the secretory vesicle membrane. The protein resides in the cytoplasm. In terms of biological role, negatively regulates Ras signaling pathways and downstream activation of MAP kinases. This chain is Sprouty-related, EVH1 domain-containing protein 2 (spred2), found in Danio rerio (Zebrafish).